The chain runs to 33 residues: Photosystem II reaction center protein Psb30 (33 aa).

The chain crosses the membrane as a helical span at residues 8-28; it reads QLGSLLLITVAGPLIVFFLFI.

This sequence belongs to the Psb30/Ycf12 family. PSII is composed of 1 copy each of membrane proteins PsbA, PsbB, PsbC, PsbD, PsbE, PsbF, PsbH, PsbI, PsbJ, PsbK, PsbL, PsbM, PsbT, PsbY, PsbZ, Psb30/Ycf12, peripheral proteins of the oxygen-evolving complex and a large number of cofactors. It forms dimeric complexes.

Its subcellular location is the plastid. The protein localises to the chloroplast thylakoid membrane. In terms of biological role, a core subunit of photosystem II (PSII), probably helps stabilize the reaction center. The polypeptide is Photosystem II reaction center protein Psb30 (Euglena anabaena (Euglenaria anabaena)).